A 615-amino-acid chain; its full sequence is Translation initiation factor IF-2 (615 aa).

The 168-residue stretch at 118 to 285 (KRPPIVTVMG…AILTLAEINE (168 aa)) folds into the tr-type G domain. The interval 127–134 (GHVDHGKT) is G1. 127-134 (GHVDHGKT) is a GTP binding site. The interval 152 to 156 (GITQH) is G2. The G3 stretch occupies residues 173-176 (DTPG). Residues 173–177 (DTPGH) and 227–230 (NKMD) contribute to the GTP site. The tract at residues 227–230 (NKMD) is G4. A G5 region spans residues 263–265 (SAI).

The protein belongs to the TRAFAC class translation factor GTPase superfamily. Classic translation factor GTPase family. IF-2 subfamily.

Its subcellular location is the cytoplasm. In terms of biological role, one of the essential components for the initiation of protein synthesis. Protects formylmethionyl-tRNA from spontaneous hydrolysis and promotes its binding to the 30S ribosomal subunits. Also involved in the hydrolysis of GTP during the formation of the 70S ribosomal complex. The protein is Translation initiation factor IF-2 of Mycoplasmoides gallisepticum (strain R(low / passage 15 / clone 2)) (Mycoplasma gallisepticum).